The sequence spans 914 residues: Translation initiation factor IF-2 (914 aa).

Disordered stretches follow at residues 52 to 84 (GGGK…VKAP) and 98 to 326 (AGGN…GVRL). Over residues 57–68 (AEGAAKAPAKAA) the composition is skewed to low complexity. Residues 69–84 (AKGDAKTAAKGDVKAP) are compositionally biased toward basic and acidic residues. Residues 98–138 (AGGNGEAAAPPAQPGGTATTPAAQATPEAPARPGPAAARPS) show a composition bias toward low complexity. Pro residues-rich tracts occupy residues 139-169 (APAP…PAPK) and 193-207 (PRPV…PGAP). Residues 236 to 296 (RPGGGRPGGP…GAAGAFGRPG (61 aa)) are compositionally biased toward gly residues. Residues 300–309 (RRGRKSKRQK) are compositionally biased toward basic residues. In terms of domain architecture, tr-type G spans 421 to 581 (TRPPVVTVMG…AVLLTADAAL (161 aa)). Residues 430 to 437 (GHVDHGKT), 469 to 473 (DTPGH), and 523 to 526 (NKID) each bind GTP.

This sequence belongs to the TRAFAC class translation factor GTPase superfamily. Classic translation factor GTPase family. IF-2 subfamily.

The protein localises to the cytoplasm. One of the essential components for the initiation of protein synthesis. Protects formylmethionyl-tRNA from spontaneous hydrolysis and promotes its binding to the 30S ribosomal subunits. Also involved in the hydrolysis of GTP during the formation of the 70S ribosomal complex. The sequence is that of Translation initiation factor IF-2 from Mycobacterium avium (strain 104).